We begin with the raw amino-acid sequence, 306 residues long: Mitochondrial 2-oxoglutarate/malate carrier protein (306 aa).

Solcar repeat units follow at residues 7–95 (VPNV…LLER), 103–194 (LSFG…AKQA), and 203–292 (DGIF…MNAA). Transmembrane regions (helical) follow at residues 9 to 38 (NVVKFAFGGTAGMGATLVVQPLDLVKNRMQ), 72 to 93 (SAGLLRQATYTTTRLGTYAFLL), 108 to 122 (KAVLGMTAGGIGSFV), 172 to 192 (PTVLRAMVVNAAQLATYSQAK), 205 to 226 (IFCHFLASMISGLATTIASMPV), and 268 to 286 (FTPYYMRLGPHTVLTFIIL).

The protein belongs to the mitochondrial carrier (TC 2.A.29) family. Interacts with ant-1.1 and ced-9. Ubiquitously expressed, but highly expressed in the anterior pharynx.

Its subcellular location is the mitochondrion. It localises to the mitochondrion inner membrane. The catalysed reaction is (S)-malate(in) + 2-oxoglutarate(out) = (S)-malate(out) + 2-oxoglutarate(in). The enzyme catalyses malonate(in) + 2-oxoglutarate(out) = malonate(out) + 2-oxoglutarate(in). It carries out the reaction succinate(in) + 2-oxoglutarate(out) = succinate(out) + 2-oxoglutarate(in). It catalyses the reaction maleate(in) + 2-oxoglutarate(out) = maleate(out) + 2-oxoglutarate(in). The catalysed reaction is oxaloacetate(in) + 2-oxoglutarate(out) = oxaloacetate(out) + 2-oxoglutarate(in). Functionally, catalyzes the transport of 2-oxoglutarate (alpha-oxoglutarate) across the inner mitochondrial membrane in an electroneutral exchange for malate. Can also exchange 2-oxoglutarate for other dicarboxylic acids such as malonate, succinate, maleate and oxaloacetate, although with lower affinity. Contributes to several metabolic processes, including the malate-aspartate shuttle, the oxoglutarate/isocitrate shuttle, in gluconeogenesis from lactate, and in nitrogen metabolism. Maintains mitochondrial fusion and fission events, and the organization and morphology of cristae. Regulator of apoptosis, insulin secretion and germline proliferation. Furthermore, plays a role in the oxidative stress response regulating endogenous levels of reactive oxygen species (ROS). Involved in the regulation of lin-35/Rb-mediated apoptosis in the germline. The sequence is that of Mitochondrial 2-oxoglutarate/malate carrier protein from Caenorhabditis elegans.